Here is a 686-residue protein sequence, read N- to C-terminus: X-linked interleukin-1 receptor accessory protein-like 2 (686 aa).

An N-terminal signal peptide occupies residues 1-16 (MKPPFLLALVVCSVVS). Residues 17 to 354 (TNLKMVSKRN…LLRKKDLIYK (338 aa)) lie on the Extracellular side of the membrane. One can recognise an Ig-like C2-type 1 domain in the interval 18-132 (NLKMVSKRNS…YCMKVSMSLT (115 aa)). C53 and C116 form a disulfide bridge. N-linked (GlcNAc...) asparagine glycosylation is found at N63, N120, N136, N211, and N328. Ig-like C2-type domains are found at residues 141 to 232 (CYNS…LKVT) and 239 to 347 (PPKP…VLLR). Disulfide bonds link C162–C214 and C265–C331. A helical transmembrane segment spans residues 355–375 (IELAGGLGAIFLLLVLLVVIY). The Cytoplasmic portion of the chain corresponds to 376–686 (KCYNIELMLF…KELSFTSDIW (311 aa)). Residues 400–556 (KEYDAYLSYT…KFWKHLVYEM (157 aa)) form the TIR domain. E488 is a catalytic residue.

This sequence belongs to the interleukin-1 receptor family. As to expression, detected at low levels in fetal and adult brain, in particular in the frontal lobe, temporal lobe and cerebellum. Detected at very low levels in skin, liver, fetal ovary and in placenta.

Its subcellular location is the membrane. It carries out the reaction NAD(+) + H2O = ADP-D-ribose + nicotinamide + H(+). The protein is X-linked interleukin-1 receptor accessory protein-like 2 (IL1RAPL2) of Homo sapiens (Human).